A 205-amino-acid chain; its full sequence is UPF0688 protein C1orf174 homolog (205 aa).

The segment covering 1-18 (MRKRKLSDRVRCSARLKN) has biased composition (basic residues). Disordered regions lie at residues 1–128 (MRKR…PSKV) and 184–205 (AKEEEEDDDDDYADGLVNEGNI). Positions 46 to 63 (NTDKKSPKKLENDEKGLM) are enriched in basic and acidic residues. Over residues 71–108 (INKTDNTASNESNAGNVNTCPSASPFSDLNEVSRNGLT) the composition is skewed to polar residues. Over residues 187–196 (EEEDDDDDYA) the composition is skewed to acidic residues.

It belongs to the UPF0688 family.

The protein resides in the nucleus. The chain is UPF0688 protein C1orf174 homolog from Xenopus laevis (African clawed frog).